The following is a 349-amino-acid chain: DNA integrity scanning protein DisA (349 aa).

The region spanning 3–143 (KQDLMDIIVK…LKYRLKNFDE (141 aa)) is the DAC domain. ATP is bound by residues Gly70, Val88, and 101–105 (TRHRT).

This sequence belongs to the DisA family. In terms of assembly, homooctamer. Mg(2+) serves as cofactor.

It carries out the reaction 2 ATP = 3',3'-c-di-AMP + 2 diphosphate. In terms of biological role, participates in a DNA-damage check-point. DisA forms globular foci that rapidly scan along the chromosomes searching for lesions. Functionally, also has diadenylate cyclase activity, catalyzing the condensation of 2 ATP molecules into cyclic di-AMP (c-di-AMP). c-di-AMP likely acts as a signaling molecule that may couple DNA integrity with a cellular process. The chain is DNA integrity scanning protein DisA from Fusobacterium nucleatum subsp. nucleatum (strain ATCC 25586 / DSM 15643 / BCRC 10681 / CIP 101130 / JCM 8532 / KCTC 2640 / LMG 13131 / VPI 4355).